We begin with the raw amino-acid sequence, 456 residues long: Cysteine--tRNA ligase (456 aa).

Cys28 is a binding site for Zn(2+). The short motif at 30–40 (ITVYDHCHLGH) is the 'HIGH' region element. Zn(2+) contacts are provided by Cys209, His234, and Glu238. The short motif at 266–270 (KMAKS) is the 'KMSKS' region element. Position 269 (Lys269) interacts with ATP.

Belongs to the class-I aminoacyl-tRNA synthetase family. In terms of assembly, monomer. It depends on Zn(2+) as a cofactor.

Its subcellular location is the cytoplasm. The enzyme catalyses tRNA(Cys) + L-cysteine + ATP = L-cysteinyl-tRNA(Cys) + AMP + diphosphate. The protein is Cysteine--tRNA ligase of Legionella pneumophila (strain Corby).